Reading from the N-terminus, the 321-residue chain is MKLHNVLKNNNKEDVVSNIEQFGGNADWFNAARVLSESLPYIQQFSGETFIIKYGGAAMKDRKLAENFAHDIVLLKQLGINPIVVHGGGSKINEFLEKINKKSTFVNGLRVTDAETLEIVEMVLCGLVNKDITQLINKAGGNAIGLCGKDANLIEAKKVCYTYKENQSNNVEKILDMGFVGEPHEVNTDLLFFMEESDFIPVIAPVCSGENDLTYNVNADLVAGALANALAAAKLIILTNVPGVTDVNGNLLSEISVSNAESLIEQGIANAGMIPKLQTCIKVVKEGYGSAHIIDGRIPHVLLLELFTIHGTGTMVLNTDI.

Substrate is bound by residues 88 to 89 (GG), Arg-110, and Asn-216.

The protein belongs to the acetylglutamate kinase family. ArgB subfamily.

The protein localises to the cytoplasm. It carries out the reaction N-acetyl-L-glutamate + ATP = N-acetyl-L-glutamyl 5-phosphate + ADP. It functions in the pathway amino-acid biosynthesis; L-arginine biosynthesis; N(2)-acetyl-L-ornithine from L-glutamate: step 2/4. Functionally, catalyzes the ATP-dependent phosphorylation of N-acetyl-L-glutamate. The chain is Acetylglutamate kinase from Ehrlichia chaffeensis (strain ATCC CRL-10679 / Arkansas).